Consider the following 248-residue polypeptide: 2,3-bisphosphoglycerate-dependent phosphoglycerate mutase (248 aa).

Substrate is bound by residues 8 to 15 (RHGESEWN), 21 to 22 (TG), R60, 87 to 90 (ERHY), K98, 114 to 115 (RR), and 183 to 184 (GN). H9 serves as the catalytic Tele-phosphohistidine intermediate. The active-site Proton donor/acceptor is E87.

It belongs to the phosphoglycerate mutase family. BPG-dependent PGAM subfamily.

It carries out the reaction (2R)-2-phosphoglycerate = (2R)-3-phosphoglycerate. Its pathway is carbohydrate degradation; glycolysis; pyruvate from D-glyceraldehyde 3-phosphate: step 3/5. Catalyzes the interconversion of 2-phosphoglycerate and 3-phosphoglycerate. This chain is 2,3-bisphosphoglycerate-dependent phosphoglycerate mutase, found in Borrelia garinii subsp. bavariensis (strain ATCC BAA-2496 / DSM 23469 / PBi) (Borreliella bavariensis).